Consider the following 149-residue polypeptide: Transcription antitermination protein NusB (149 aa).

This sequence belongs to the NusB family.

Involved in transcription antitermination. Required for transcription of ribosomal RNA (rRNA) genes. Binds specifically to the boxA antiterminator sequence of the ribosomal RNA (rrn) operons. The sequence is that of Transcription antitermination protein NusB from Sphingopyxis alaskensis (strain DSM 13593 / LMG 18877 / RB2256) (Sphingomonas alaskensis).